Consider the following 655-residue polypeptide: Epithelial sodium channel subunit gamma (655 aa).

Residues 1–55 (MAPGEKIKAKIKKNLPVRGPQAPTIKDLMHWYCLNTNTHGCRRIVVSRGRLRRLL) are Cytoplasmic-facing. A helical membrane pass occupies residues 56–76 (WIAFTLTAVALIIWQCALLVF). Over 77–547 (SFYTVSVSIK…GGQLGLWMSC (471 aa)) the chain is Extracellular. 8 cysteine pairs are disulfide-bonded: C100/C289, C213/C220, C266/C273, C378/C463, C400/C459, C404/C455, C413/C440, and C415/C429. Positions 140–227 (RKRREAGSMR…SDCATYTFSS (88 aa)) are gating release of inhibition by proteolysis (GRIP); protease-sensitive region that is responsible for the proteolytic activation of the channel. An N-linked (GlcNAc...) asparagine glycan is attached at N215. A glycan (N-linked (GlcNAc...) asparagine) is linked at N277. The N-linked (GlcNAc...) asparagine glycan is linked to N503. A helical transmembrane segment spans residues 548–568 (SVVCVIEIIEVFFIDFFSIIA). Over 569-655 (RRQWQKAKDW…LTDTQLTNEF (87 aa)) the chain is Cytoplasmic. Residues 582–636 (RRTPPSTETPSSQQGQDNPALDTDDDLPTFTSAMRLPPAPEAPVPGTPPPRYNTL) form a disordered region. Over residues 585 to 598 (PPSTETPSSQQGQD) the composition is skewed to polar residues. A compositionally biased stretch (pro residues) spans 618-632 (PPAPEAPVPGTPPPR). A PY motif; recruits WW domain-containing proteins and is thereby required for ubiquitination and inhibition of the channel by NEDD4 and NEDD4L motif is present at residues 629–633 (PPPRY).

The protein belongs to the amiloride-sensitive sodium channel (TC 1.A.6) family. SCNN1G subfamily. As to quaternary structure, component of the heterotrimeric epithelial sodium channel (ENaC) composed of an alpha/SCNN1A, a beta/SCNN1B and a gamma/SCNN1G subunit. Interacts with WWP1 (via WW domains). Interacts with WWP2 (via WW domains); inhibits the channel. Interacts with the full-length immature form of PCSK9 (pro-PCSK9); inhibits ENaC by promoting its proteasomal degradation. Interacts with BPIFA1; the interaction is indirect via SCNN1B and inhibits the proteolytic maturation of SCNN1A and SCNN1G and the activation of ENaC. In terms of processing, phosphorylated on serine and threonine residues. Aldosterone and insulin increase the basal level of phosphorylation. Ubiquitinated. Can be ubiquitinated at multiple sites and undergo monoubiquitination and polyubiquitination. Ubiquitination by NEDD4 or NEDD4L inhibits the ENaC channel through endocytosis, intracellular retention and degradation of its individual subunits. Post-translationally, ENaC is activated through the proteolytic maturation of its subunits. Furin cleaves the SCNN1G subunit first, followed by cleavage by prostasin (PRSS8), which results in a stepwise increase in the open probability of the channel due to the release of an inhibitory tract. BPIFA1, which is recruited by the SCNN1B subunit, prevents the proteolytic activation of ENaC. In terms of processing, N-glycosylated. N-linked glycans are processed to complex type during ENaC complex assembly and transport to the plasma membrane. As to expression, lung and kidney.

It localises to the apical cell membrane. The enzyme catalyses Na(+)(in) = Na(+)(out). With respect to regulation, originally identified and characterized by its inhibition by the diuretic drug amiloride. In terms of biological role, this is one of the three pore-forming subunits of the heterotrimeric epithelial sodium channel (ENaC), a critical regulator of sodium balance and fluid homeostasis. ENaC operates in epithelial tissues, where it mediates the electrodiffusion of sodium ions from extracellular fluid through the apical membrane of cells, with water following osmotically. It plays a key role in maintaining sodium homeostasis through electrogenic sodium reabsorption in the kidneys. Additionally, ENaC is essential for airway surface liquid homeostasis, which is crucial for proper mucus clearance. The chain is Epithelial sodium channel subunit gamma from Mus musculus (Mouse).